The primary structure comprises 309 residues: Protein phosphatase 1 regulatory subunit 42 (309 aa).

7 LRR repeats span residues 29–50 (KITHINFSDKNIDAIEDLSLCK), 51–72 (NLSVLYLYDNCISQITNLNYAT), 73–94 (NLTHLYLQNNCISCIENLRSLK), 95–116 (KLEKLYLGGNYIAVIEGLEGLG), 117–138 (ELRELHVENQRLPLGEKLLFDP), 147–168 (SLCILNISNNNIDDITDLELLE), and 169–190 (NLNQLIAVDNQLLHVKDLEFLL). The LRRCT domain occupies 204 to 242 (NPVCLKPKYRDRLILVSKSLEFLDGKEIKNIERQFLMNW).

As to quaternary structure, interacts with PPP1CC isoform gamma-2; the interaction is direct. Interacts with actin, dynein, KIF5B, KIFC1 and tubulin. Associates with microtubules. Phosphorylated; in the testis.

It localises to the cytoplasm. It is found in the cytoskeleton. The protein localises to the microtubule organizing center. Its subcellular location is the centrosome. Functionally, regulates phosphatase activity of protein phosphatase 1 (PP1) complexes in the testis. The chain is Protein phosphatase 1 regulatory subunit 42 from Homo sapiens (Human).